We begin with the raw amino-acid sequence, 109 residues long: Putative glutaredoxin-C11 (109 aa).

The Glutaredoxin domain maps to 2–108; it reads AEMVARLASE…PLLKSAGALW (107 aa). Residues cysteine 22 and cysteine 25 are joined by a disulfide bond. The Responsive for interaction with TGA factors signature appears at 106–109; sequence ALWL.

It belongs to the glutaredoxin family. CC-type subfamily.

It localises to the cytoplasm. It is found in the nucleus. Has a glutathione-disulfide oxidoreductase activity in the presence of NADPH and glutathione reductase. Reduces low molecular weight disulfides and proteins. The protein is Putative glutaredoxin-C11 (GRXC11) of Oryza sativa subsp. japonica (Rice).